The chain runs to 220 residues: Fructose-6-phosphate aldolase (220 aa).

Lys-85 serves as the catalytic Schiff-base intermediate with substrate.

The protein belongs to the transaldolase family. Type 3A subfamily. As to quaternary structure, homodecamer.

The protein localises to the cytoplasm. It catalyses the reaction beta-D-fructose 6-phosphate = dihydroxyacetone + D-glyceraldehyde 3-phosphate. In terms of biological role, catalyzes the reversible formation of fructose 6-phosphate from dihydroxyacetone and D-glyceraldehyde 3-phosphate via an aldolization reaction. This chain is Fructose-6-phosphate aldolase, found in Salmonella choleraesuis (strain SC-B67).